The following is a 165-amino-acid chain: Putative 4-hydroxy-4-methyl-2-oxoglutarate aldolase (165 aa).

Substrate is bound by residues 80–83 (GGNL) and Arg-102. An a divalent metal cation-binding site is contributed by Asp-103.

This sequence belongs to the class II aldolase/RraA-like family. As to quaternary structure, homotrimer. A divalent metal cation serves as cofactor.

It carries out the reaction 4-hydroxy-4-methyl-2-oxoglutarate = 2 pyruvate. The catalysed reaction is oxaloacetate + H(+) = pyruvate + CO2. Catalyzes the aldol cleavage of 4-hydroxy-4-methyl-2-oxoglutarate (HMG) into 2 molecules of pyruvate. Also contains a secondary oxaloacetate (OAA) decarboxylase activity due to the common pyruvate enolate transition state formed following C-C bond cleavage in the retro-aldol and decarboxylation reactions. The sequence is that of Putative 4-hydroxy-4-methyl-2-oxoglutarate aldolase from Cupriavidus taiwanensis (strain DSM 17343 / BCRC 17206 / CCUG 44338 / CIP 107171 / LMG 19424 / R1) (Ralstonia taiwanensis (strain LMG 19424)).